The primary structure comprises 423 residues: MPVTAIVGGQWGDEGKGKVVDMLAQEADYVVRFSGGDNAGHTVINPMGEFKLHIIPSGVFYPGVKCIIGNGVVINPDVFIRERNELISRGVNVSNVFISDRAHLVLPYHILLDGLEEEARGNKSLGTTRRGIGPAFVDKYARMGIRVGDLLLPEYLRERLEYVLECKNQILTKVYDAAPISLDEIYETCLKWGKELAPNIRETTHIIEEAISQDKKIIMEGAQGALLDPDFGTYPYGTSSSPLAAGGCLGIGIGPASVSATLGVFKAYSTRVGGGPMPTELLDKTGDTIRNEAHEYGTTTGRPRRIGWFDAVAGRFSCQINGMTTAIMTRLDIMDILPKISICTAYELNGKIIKYFPANSGELAKCKPIYEEMPGWLCSTKEVRNYDDLPEAAKAYICRIEKLIGCQMSAVCIGPSREQTIYK.

GTP is bound by residues 12 to 18 and 40 to 42; these read GDEGKGK and GHT. The Proton acceptor role is filled by aspartate 13. Aspartate 13 and glycine 40 together coordinate Mg(2+). IMP-binding positions include 13–16, 38–41, threonine 128, arginine 142, glutamine 223, threonine 238, and arginine 302; these read DEGK and NAGH. The Proton donor role is filled by histidine 41. Substrate is bound at residue 298–304; it reads TTTGRPR. GTP is bound by residues arginine 304, 330–332, and 412–414; these read RLD and CIG.

Belongs to the adenylosuccinate synthetase family. In terms of assembly, homodimer. The cofactor is Mg(2+).

The protein localises to the cytoplasm. The catalysed reaction is IMP + L-aspartate + GTP = N(6)-(1,2-dicarboxyethyl)-AMP + GDP + phosphate + 2 H(+). It participates in purine metabolism; AMP biosynthesis via de novo pathway; AMP from IMP: step 1/2. Functionally, plays an important role in the de novo pathway of purine nucleotide biosynthesis. Catalyzes the first committed step in the biosynthesis of AMP from IMP. The polypeptide is Adenylosuccinate synthetase (Dehalococcoides mccartyi (strain ATCC BAA-2100 / JCM 16839 / KCTC 5957 / BAV1)).